Consider the following 183-residue polypeptide: ATP-dependent protease subunit HslV (183 aa).

Thr-7 is a catalytic residue. The Na(+) site is built by Gly-162, Cys-165, and Thr-168.

It belongs to the peptidase T1B family. HslV subfamily. In terms of assembly, a double ring-shaped homohexamer of HslV is capped on each side by a ring-shaped HslU homohexamer. The assembly of the HslU/HslV complex is dependent on binding of ATP.

Its subcellular location is the cytoplasm. The catalysed reaction is ATP-dependent cleavage of peptide bonds with broad specificity.. With respect to regulation, allosterically activated by HslU binding. Protease subunit of a proteasome-like degradation complex believed to be a general protein degrading machinery. This Alkalilimnicola ehrlichii (strain ATCC BAA-1101 / DSM 17681 / MLHE-1) protein is ATP-dependent protease subunit HslV.